We begin with the raw amino-acid sequence, 74 residues long: Kappa-scoloptoxin(07)-Ssm2d (74 aa).

The first 19 residues, 1 to 19, serve as a signal peptide directing secretion; sequence MLVFYALLFVTVFSNTVMG. A propeptide spanning residues 20–41 is cleaved from the precursor; that stretch reads ATIDKPIPKPILREAIEEIEVN.

The protein belongs to the scoloptoxin-07 family. In terms of processing, contains 3 disulfide bonds. Expressed by the venom gland.

Its subcellular location is the secreted. Functionally, inhibits voltage-gated potassium channels. The protein is Kappa-scoloptoxin(07)-Ssm2d of Scolopendra mutilans (Chinese red-headed centipede).